The primary structure comprises 467 residues: MSHNNVTHGKPWSGRFHEPTDTFVEEFTASIGFDHRLYRQDIHGSIAHARMLAKVGVLSREECDAIIQGLETIAQDISRGQFSWSVALEDVHMNIEAALTERIGPVGKKLHTGRSRNDQIATDIRLYLRDAIDLITAQLQRLQEGLLAIAEREAATIMPGFTHLQTAQPVTFGHHLMAWFEMLLRDTGRLADCRHRVNVLPLGAAALAGTTFPIDRAYTAELLGFDGIAENSLDAVSDRDFAIEFTAAGALLMTHLSRFAEELVLWSSAQFDFITLPDRFCTGSSIMPQKKNPDVPELVRGKTGRVNGHLVSLLTLMKGQPLAYNKDNQEDKEPLFDTVDTLLGCLRAFADMIPAITTNPDKMREAATKGYATATDLADYLVRKGVSFRDAHEIVGKAVALAIEQSKDLAALKLATLQDFSPVIEEDVFDVLTLEGSVAARNHLGGTAPAQVRAAIQRGREKLNSLA.

Belongs to the lyase 1 family. Argininosuccinate lyase subfamily.

The protein localises to the cytoplasm. The enzyme catalyses 2-(N(omega)-L-arginino)succinate = fumarate + L-arginine. Its pathway is amino-acid biosynthesis; L-arginine biosynthesis; L-arginine from L-ornithine and carbamoyl phosphate: step 3/3. In Nitrosococcus oceani (strain ATCC 19707 / BCRC 17464 / JCM 30415 / NCIMB 11848 / C-107), this protein is Argininosuccinate lyase.